The following is a 301-amino-acid chain: Pseudouridine-5'-phosphate glycosidase (301 aa).

The active-site Proton donor is the Glu25. Substrate-binding residues include Lys86 and Val106. Asp138 provides a ligand contact to Mn(2+). 140–142 (SAD) provides a ligand contact to substrate. Lys159 (nucleophile) is an active-site residue.

It belongs to the pseudouridine-5'-phosphate glycosidase family. As to quaternary structure, homotrimer. It depends on Mn(2+) as a cofactor.

The enzyme catalyses D-ribose 5-phosphate + uracil = psi-UMP + H2O. Functionally, catalyzes the reversible cleavage of pseudouridine 5'-phosphate (PsiMP) to ribose 5-phosphate and uracil. Functions biologically in the cleavage direction, as part of a pseudouridine degradation pathway. The polypeptide is Pseudouridine-5'-phosphate glycosidase (Geobacillus kaustophilus (strain HTA426)).